Reading from the N-terminus, the 344-residue chain is Homoserine O-acetyltransferase (344 aa).

Residue cysteine 142 is the Acyl-thioester intermediate of the active site. Lysine 163 and serine 192 together coordinate substrate. Histidine 235 acts as the Proton acceptor in catalysis. Glutamate 237 is a catalytic residue. A substrate-binding site is contributed by arginine 249.

The protein belongs to the MetA family.

The protein resides in the cytoplasm. The catalysed reaction is L-homoserine + acetyl-CoA = O-acetyl-L-homoserine + CoA. The protein operates within amino-acid biosynthesis; L-methionine biosynthesis via de novo pathway; O-acetyl-L-homoserine from L-homoserine: step 1/1. Its function is as follows. Transfers an acetyl group from acetyl-CoA to L-homoserine, forming acetyl-L-homoserine. This Bifidobacterium adolescentis (strain ATCC 15703 / DSM 20083 / NCTC 11814 / E194a) protein is Homoserine O-acetyltransferase.